A 204-amino-acid polypeptide reads, in one-letter code: Ras-related and estrogen-regulated growth inhibitor-like protein (204 aa).

The interval 1 to 204 (MNDVKLTVLG…NVFGKRRKSV (204 aa)) is small GTPase-like. Residues 10–17 (GGEGTGKS), 57–63 (DPCSQPQ), and 122–125 (NKQD) each bind GTP.

It belongs to the small GTPase superfamily. Ras family.

The enzyme catalyses GTP + H2O = GDP + phosphate + H(+). Binds GDP/GTP and may possess intrinsic GTPase activity. The polypeptide is Ras-related and estrogen-regulated growth inhibitor-like protein (RERGL) (Bos taurus (Bovine)).